Reading from the N-terminus, the 342-residue chain is UDP-3-O-(3-hydroxymyristoyl)glucosamine N-acyltransferase (342 aa).

Catalysis depends on His-239, which acts as the Proton acceptor.

This sequence belongs to the transferase hexapeptide repeat family. LpxD subfamily. As to quaternary structure, homotrimer.

The catalysed reaction is a UDP-3-O-[(3R)-3-hydroxyacyl]-alpha-D-glucosamine + a (3R)-hydroxyacyl-[ACP] = a UDP-2-N,3-O-bis[(3R)-3-hydroxyacyl]-alpha-D-glucosamine + holo-[ACP] + H(+). It catalyses the reaction UDP-3-O-[(3R)-3-hydroxytetradecanoyl]-alpha-D-glucosamine + (3R)-hydroxytetradecanoyl-[ACP] = UDP-2-N,3-O-bis[(3R)-3-hydroxytetradecanoyl]-alpha-D-glucosamine + holo-[ACP] + H(+). It participates in glycolipid biosynthesis; lipid IV(A) biosynthesis; lipid IV(A) from (3R)-3-hydroxytetradecanoyl-[acyl-carrier-protein] and UDP-N-acetyl-alpha-D-glucosamine: step 3/6. Functionally, catalyzes the N-acylation of UDP-3-O-(hydroxytetradecanoyl)glucosamine using 3-hydroxytetradecanoyl-ACP as the acyl donor. Is involved in the biosynthesis of lipid A, a phosphorylated glycolipid that anchors the lipopolysaccharide to the outer membrane of the cell. The polypeptide is UDP-3-O-(3-hydroxymyristoyl)glucosamine N-acyltransferase (Photorhabdus laumondii subsp. laumondii (strain DSM 15139 / CIP 105565 / TT01) (Photorhabdus luminescens subsp. laumondii)).